The chain runs to 148 residues: 18 kDa antigen (148 aa).

One can recognise a sHSP domain in the interval 21 to 131 (TSARPAVMPM…KPRKISVDRG (111 aa)).

Belongs to the small heat shock protein (HSP20) family.

Its function is as follows. Not known. This protein is one of the major immune reactive proteins in mycobacteria. This Mycobacterium leprae (strain TN) protein is 18 kDa antigen (hsp18).